Consider the following 233-residue polypeptide: MQKPIIEFRNVSKKFGNKTPISKVSFIVKKNNITTLIGPNGAGKTTIVRLMLGLEKPTSGEVIIDRKLKIGYVPQKFGLTTDIPITVKKFLDLLAPSHFNKNIKEISSFIDLEHIKKQEISKLSGGQFQKVVLACSIINNPDLIILDEPLQSLDVTSQQEFYQLIHFIRKKLNITVFMISHDLFTVIKNSDQVICLNGHICCSGVPHEITPNSEFSNALSSLGFYTHNHDHKH.

One can recognise an ABC transporter domain in the interval 6 to 222; the sequence is IEFRNVSKKF…SEFSNALSSL (217 aa). 38–45 provides a ligand contact to ATP; the sequence is GPNGAGKT.

This sequence belongs to the ABC transporter superfamily. Zinc importer (TC 3.A.1.15.5) family. The complex is composed of two ATP-binding proteins (ZnuC), two transmembrane proteins (ZnuB) and a solute-binding protein (ZnuA).

Its subcellular location is the cell inner membrane. It carries out the reaction Zn(2+)(out) + ATP(in) + H2O(in) = Zn(2+)(in) + ADP(in) + phosphate(in) + H(+)(in). Functionally, part of the ABC transporter complex ZnuABC involved in zinc import. Responsible for energy coupling to the transport system. The polypeptide is Zinc import ATP-binding protein ZnuC (Rickettsia prowazekii (strain Madrid E)).